Reading from the N-terminus, the 280-residue chain is Proteasome subunit beta (280 aa).

Residues 1 to 53 constitute a propeptide, removed in mature form; by autocatalysis; it reads MSEYSAGRSGFSPAYLDRVGSSFTDFLAAAAPHLLPGSRPVPQIPVGNVTPHG. Residue Thr54 is the Nucleophile of the active site.

This sequence belongs to the peptidase T1B family. As to quaternary structure, the 20S proteasome core is composed of 14 alpha and 14 beta subunits that assemble into four stacked heptameric rings, resulting in a barrel-shaped structure. The two inner rings, each composed of seven catalytic beta subunits, are sandwiched by two outer rings, each composed of seven alpha subunits. The catalytic chamber with the active sites is on the inside of the barrel. Has a gated structure, the ends of the cylinder being occluded by the N-termini of the alpha-subunits. Is capped by the proteasome-associated ATPase, ARC.

The protein localises to the cytoplasm. The catalysed reaction is Cleavage of peptide bonds with very broad specificity.. It participates in protein degradation; proteasomal Pup-dependent pathway. Its activity is regulated as follows. The formation of the proteasomal ATPase ARC-20S proteasome complex, likely via the docking of the C-termini of ARC into the intersubunit pockets in the alpha-rings, may trigger opening of the gate for substrate entry. Interconversion between the open-gate and close-gate conformations leads to a dynamic regulation of the 20S proteasome proteolysis activity. Functionally, component of the proteasome core, a large protease complex with broad specificity involved in protein degradation. In Geodermatophilus obscurus (strain ATCC 25078 / DSM 43160 / JCM 3152 / CCUG 61914 / KCC A-0152 / KCTC 9177 / NBRC 13315 / NRRL B-3577 / G-20), this protein is Proteasome subunit beta.